A 249-amino-acid polypeptide reads, in one-letter code: tRNA pseudouridine synthase A (249 aa).

The Nucleophile role is filled by D53. Y111 is a substrate binding site.

The protein belongs to the tRNA pseudouridine synthase TruA family. Homodimer.

It catalyses the reaction uridine(38/39/40) in tRNA = pseudouridine(38/39/40) in tRNA. Its function is as follows. Formation of pseudouridine at positions 38, 39 and 40 in the anticodon stem and loop of transfer RNAs. The polypeptide is tRNA pseudouridine synthase A (Streptococcus pyogenes serotype M3 (strain ATCC BAA-595 / MGAS315)).